A 502-amino-acid chain; its full sequence is Xylulose kinase (502 aa).

82-83 (MH) lines the substrate pocket. D240 functions as the Proton acceptor in the catalytic mechanism.

Belongs to the FGGY kinase family.

The catalysed reaction is D-xylulose + ATP = D-xylulose 5-phosphate + ADP + H(+). Catalyzes the phosphorylation of D-xylulose to D-xylulose 5-phosphate. The chain is Xylulose kinase from Levilactobacillus brevis (Lactobacillus brevis).